Reading from the N-terminus, the 139-residue chain is Small ribosomal subunit protein uS19 (139 aa).

The protein belongs to the universal ribosomal protein uS19 family.

Functionally, protein S19 forms a complex with S13 that binds strongly to the 16S ribosomal RNA. In Ignicoccus hospitalis (strain KIN4/I / DSM 18386 / JCM 14125), this protein is Small ribosomal subunit protein uS19.